The primary structure comprises 66 residues: Opicalcin-2 (66 aa).

An N-terminal signal peptide occupies residues 1–22 (MKPSLIIVTFIVVFMTISCVAA). A propeptide spanning residues 23–31 (DDEQETWIE) is cleaved from the precursor. 3 cysteine pairs are disulfide-bonded: C36–C50, C43–C54, and C49–C65. The segment at 55 to 57 (KRR) is essential for stimulation of [3H]ryanodine binding to RYR1.

This sequence belongs to the scorpion calcin family. Expressed by the venom gland.

The protein localises to the secreted. This toxin stabilizes ryanodine receptor 1 (RyR1) opening in a long-lasting subconductance state (40% of the full conductance state). Furthermore, it triggers calcium release from sarcoplasmic vesicles (64.2 nM are enough to induce a sharp release, and 50% of the total calcium is released after toxin (100 nM) addition) probably by acting as a cell-penetrating peptide (CPP). In addition, it has been shown to dose-dependently stimulate ryanodine binding to RyR1 (EC(50)=3.2 nM). It also augments the bell-shaped calcium-[3H]ryanodine binding curve that is maximal at about 10 uM calcium concentration. It binds a different site as ryanodine. It acts synergistically with caffeine. In vivo, intracerebroventricular injection into mice induces neurotoxic symptoms, followed by death. In Opistophthalmus carinatus (African yellow leg scorpion), this protein is Opicalcin-2.